We begin with the raw amino-acid sequence, 394 residues long: DNA primase large subunit PriL (394 aa).

The [4Fe-4S] cluster site is built by Cys-231, Cys-340, Cys-351, and Cys-357.

It belongs to the eukaryotic-type primase large subunit family. In terms of assembly, heterodimer of a small subunit (PriS) and a large subunit (PriL). It depends on [4Fe-4S] cluster as a cofactor.

Functionally, regulatory subunit of DNA primase, an RNA polymerase that catalyzes the synthesis of short RNA molecules used as primers for DNA polymerase during DNA replication. Stabilizes and modulates the activity of the small subunit, increasing the rate of DNA synthesis, and conferring RNA synthesis capability. The DNA polymerase activity may enable DNA primase to also catalyze primer extension after primer synthesis. May also play a role in DNA repair. This is DNA primase large subunit PriL from Pyrococcus horikoshii (strain ATCC 700860 / DSM 12428 / JCM 9974 / NBRC 100139 / OT-3).